The primary structure comprises 87 residues: Phosphoribosyl-ATP pyrophosphatase (87 aa).

It belongs to the PRA-PH family.

The protein localises to the cytoplasm. It catalyses the reaction 1-(5-phospho-beta-D-ribosyl)-ATP + H2O = 1-(5-phospho-beta-D-ribosyl)-5'-AMP + diphosphate + H(+). It participates in amino-acid biosynthesis; L-histidine biosynthesis; L-histidine from 5-phospho-alpha-D-ribose 1-diphosphate: step 2/9. The chain is Phosphoribosyl-ATP pyrophosphatase from Corynebacterium diphtheriae (strain ATCC 700971 / NCTC 13129 / Biotype gravis).